A 461-amino-acid polypeptide reads, in one-letter code: Methylenetetrahydrofolate--tRNA-(uracil-5-)-methyltransferase TrmFO (461 aa).

16 to 21 (GAGLAG) provides a ligand contact to FAD.

This sequence belongs to the MnmG family. TrmFO subfamily. The cofactor is FAD.

Its subcellular location is the cytoplasm. The catalysed reaction is uridine(54) in tRNA + (6R)-5,10-methylene-5,6,7,8-tetrahydrofolate + NADH + H(+) = 5-methyluridine(54) in tRNA + (6S)-5,6,7,8-tetrahydrofolate + NAD(+). It carries out the reaction uridine(54) in tRNA + (6R)-5,10-methylene-5,6,7,8-tetrahydrofolate + NADPH + H(+) = 5-methyluridine(54) in tRNA + (6S)-5,6,7,8-tetrahydrofolate + NADP(+). In terms of biological role, catalyzes the folate-dependent formation of 5-methyl-uridine at position 54 (M-5-U54) in all tRNAs. The protein is Methylenetetrahydrofolate--tRNA-(uracil-5-)-methyltransferase TrmFO of Parasynechococcus marenigrum (strain WH8102).